The sequence spans 396 residues: Elongation factor Tu (396 aa).

Residues 10-205 (KPHVNIGTIG…ACDDSIPDPE (196 aa)) enclose the tr-type G domain. The interval 19–26 (GHVDHGKT) is G1. 19–26 (GHVDHGKT) lines the GTP pocket. Position 26 (Thr-26) interacts with Mg(2+). Positions 62–66 (GITIN) are G2. Positions 83 to 86 (DAPG) are G3. GTP contacts are provided by residues 83 to 87 (DAPGH) and 138 to 141 (NKCD). The interval 138-141 (NKCD) is G4. The interval 175 to 177 (SAL) is G5.

This sequence belongs to the TRAFAC class translation factor GTPase superfamily. Classic translation factor GTPase family. EF-Tu/EF-1A subfamily. In terms of assembly, monomer.

The protein localises to the cytoplasm. The enzyme catalyses GTP + H2O = GDP + phosphate + H(+). GTP hydrolase that promotes the GTP-dependent binding of aminoacyl-tRNA to the A-site of ribosomes during protein biosynthesis. This chain is Elongation factor Tu, found in Corynebacterium aurimucosum (strain ATCC 700975 / DSM 44827 / CIP 107346 / CN-1) (Corynebacterium nigricans).